Consider the following 450-residue polypeptide: Glucose-6-phosphate isomerase (450 aa).

The active-site Proton donor is Glu-291. Residues His-312 and Lys-426 contribute to the active site.

Belongs to the GPI family.

The protein localises to the cytoplasm. The catalysed reaction is alpha-D-glucose 6-phosphate = beta-D-fructose 6-phosphate. The protein operates within carbohydrate biosynthesis; gluconeogenesis. It participates in carbohydrate degradation; glycolysis; D-glyceraldehyde 3-phosphate and glycerone phosphate from D-glucose: step 2/4. Its function is as follows. Catalyzes the reversible isomerization of glucose-6-phosphate to fructose-6-phosphate. This Clostridium perfringens (strain ATCC 13124 / DSM 756 / JCM 1290 / NCIMB 6125 / NCTC 8237 / Type A) protein is Glucose-6-phosphate isomerase.